Here is a 1430-residue protein sequence, read N- to C-terminus: 3'-5' RNA helicase YTHDC2 (1430 aa).

Positions 1 to 37 are disordered; it reads MSRPSSVSPRQPAPGGGGGGGPSPCGPGGGGRAKGLK. The span at 14–33 shows a compositional bias: gly residues; it reads PGGGGGGGPSPCGPGGGGRA. The R3H domain maps to 38–106; it reads DIRIDEEVKI…NRYLTVKKKD (69 aa). The 167-residue stretch at 203–369 folds into the Helicase ATP-binding domain; sequence VKIIKENKVV…FGSCPVIYIQ (167 aa). 216–223 is a binding site for ATP; that stretch reads GETGSGKT. The DEAH box signature appears at 316-319; it reads DEVH. ANK repeat units follow at residues 506-538 and 539-571; these read TSATALMVAAGRGFASQVEQLISMGANVHSKAS and NGWMALDWAKHFGQTEIVDLLESYSASLEFGNL. In terms of domain architecture, Helicase C-terminal spans 612 to 784; sequence LLYNICHSCD…ELCLHTKLLA (173 aa). Phosphoserine occurs at positions 1089, 1090, and 1092. The segment covering 1164–1174 has biased composition (polar residues); sequence EQSAGLQQPSG. A disordered region spans residues 1164 to 1288; it reads EQSAGLQQPS…SPSPRPNMPV (125 aa). A compositionally biased stretch (low complexity) spans 1191 to 1200; that stretch reads SSWRSNNSRK. Ser1202 bears the Phosphoserine mark. The segment covering 1231–1249 has biased composition (basic and acidic residues); that stretch reads KYKDRGILHPKRGTEDRSD. A compositionally biased stretch (low complexity) spans 1250 to 1264; sequence QSSVKSTDSSSYPSP. Residues Ser1263, Ser1267, and Ser1281 each carry the phosphoserine modification. The 131-residue stretch at 1288–1418 folds into the YTH domain; it reads VRYFIMKSSN…QVGEQLLQLW (131 aa). Residues 1294-1296, Trp1310, and Trp1360 each bind RNA; that span reads KSS.

The protein belongs to the DEAD box helicase family. DEAH subfamily. Interacts with MEIOC; binds transcripts that regulate the mitotic cell cycle inhibiting progression into metaphase, thereby allowing meiotic prophase to proceed normally. Interacts (via ANK repeats) with XRN1. Interacts with ZCCHC4. Associates with the small ribosomal subunit. Interacts with RBM46.

Its subcellular location is the cytoplasm. The protein resides in the perinuclear region. It catalyses the reaction ATP + H2O = ADP + phosphate + H(+). Its function is as follows. 3'-5' RNA helicase that plays a key role in the male and female germline by promoting transition from mitotic to meiotic divisions in stem cells. Specifically recognizes and binds N6-methyladenosine (m6A)-containing RNAs, a modification present at internal sites of mRNAs and some non-coding RNAs that plays a role in the efficiency of RNA processing and stability. Essential for ensuring a successful progression of the meiotic program in the germline by regulating the level of m6A-containing RNAs. Acts by binding and promoting degradation of m6A-containing mRNAs: the 3'-5' RNA helicase activity is required for this process and RNA degradation may be mediated by XRN1 exoribonuclease. Required for both spermatogenesis and oogenesis. The chain is 3'-5' RNA helicase YTHDC2 from Pongo abelii (Sumatran orangutan).